A 701-amino-acid polypeptide reads, in one-letter code: Polyribonucleotide nucleotidyltransferase (701 aa).

Mg(2+) contacts are provided by Asp485 and Asp491. In terms of domain architecture, KH spans 552-611 (PKTQIMSINPDKIRDVIGAGGKVINKIIQDTGVKIDIKEDGTVFVSSTDHNGVNEAIKII). Residues 621-689 (GEVYLGKVTK…NQGRINLSRK (69 aa)) form the S1 motif domain.

It belongs to the polyribonucleotide nucleotidyltransferase family. It depends on Mg(2+) as a cofactor.

It localises to the cytoplasm. It carries out the reaction RNA(n+1) + phosphate = RNA(n) + a ribonucleoside 5'-diphosphate. Its function is as follows. Involved in mRNA degradation. Catalyzes the phosphorolysis of single-stranded polyribonucleotides processively in the 3'- to 5'-direction. The polypeptide is Polyribonucleotide nucleotidyltransferase (Clostridium beijerinckii (strain ATCC 51743 / NCIMB 8052) (Clostridium acetobutylicum)).